A 753-amino-acid chain; its full sequence is Fatty acid oxidation complex subunit alpha (753 aa).

The tract at residues 8 to 197 is enoyl-CoA hydratase; sequence SVTHPAFTLN…KMGLVDDVVP (190 aa). The segment at 313–747 is 3-hydroxyacyl-CoA dehydrogenase; the sequence is RAIHRVGVLG…FYPVDANIDE (435 aa). Residues 593–622 are disordered; that stretch reads SNPTLHSNSTKNSSPTKNGNSPAKRNSFKW. Over residues 599-614 the composition is skewed to low complexity; sequence SNSTKNSSPTKNGNSP.

The protein in the N-terminal section; belongs to the enoyl-CoA hydratase/isomerase family. This sequence in the central section; belongs to the 3-hydroxyacyl-CoA dehydrogenase family. In terms of assembly, heterotetramer of two alpha chains (FadJ) and two beta chains (FadI).

The protein resides in the cytoplasm. The catalysed reaction is a (3S)-3-hydroxyacyl-CoA = a (2E)-enoyl-CoA + H2O. The enzyme catalyses a 4-saturated-(3S)-3-hydroxyacyl-CoA = a (3E)-enoyl-CoA + H2O. It catalyses the reaction a (3S)-3-hydroxyacyl-CoA + NAD(+) = a 3-oxoacyl-CoA + NADH + H(+). It carries out the reaction (3S)-3-hydroxybutanoyl-CoA = (3R)-3-hydroxybutanoyl-CoA. It participates in lipid metabolism; fatty acid beta-oxidation. Catalyzes the formation of a hydroxyacyl-CoA by addition of water on enoyl-CoA. Also exhibits 3-hydroxyacyl-CoA epimerase and 3-hydroxyacyl-CoA dehydrogenase activities. This chain is Fatty acid oxidation complex subunit alpha, found in Yersinia pseudotuberculosis serotype I (strain IP32953).